A 169-amino-acid polypeptide reads, in one-letter code: Cytochrome c-type biogenesis protein CcmE (169 aa).

Over 1–7 (MTRKQRR) the chain is Cytoplasmic. A helical; Signal-anchor for type II membrane protein transmembrane segment spans residues 8-28 (MTIIGGSLAVLALAAALVLNA). Topologically, residues 29 to 169 (LRDSIVFFST…AQGNPQGAVR (141 aa)) are periplasmic. Residues histidine 122 and tyrosine 126 each contribute to the heme site. A disordered region spans residues 143–169 (DDYGGKASDGVKPAATTAQGNPQGAVR). A compositionally biased stretch (polar residues) spans 158–169 (TTAQGNPQGAVR).

Belongs to the CcmE/CycJ family.

The protein localises to the cell inner membrane. Functionally, heme chaperone required for the biogenesis of c-type cytochromes. Transiently binds heme delivered by CcmC and transfers the heme to apo-cytochromes in a process facilitated by CcmF and CcmH. This is Cytochrome c-type biogenesis protein CcmE from Bradyrhizobium diazoefficiens (strain JCM 10833 / BCRC 13528 / IAM 13628 / NBRC 14792 / USDA 110).